A 193-amino-acid chain; its full sequence is NADH-quinone oxidoreductase subunit B (193 aa).

Cysteine 72, cysteine 73, cysteine 137, and cysteine 167 together coordinate [4Fe-4S] cluster.

It belongs to the complex I 20 kDa subunit family. As to quaternary structure, NDH-1 is composed of 14 different subunits. Subunits NuoB, C, D, E, F, and G constitute the peripheral sector of the complex. It depends on [4Fe-4S] cluster as a cofactor.

It is found in the cell inner membrane. The enzyme catalyses a quinone + NADH + 5 H(+)(in) = a quinol + NAD(+) + 4 H(+)(out). Its function is as follows. NDH-1 shuttles electrons from NADH, via FMN and iron-sulfur (Fe-S) centers, to quinones in the respiratory chain. The immediate electron acceptor for the enzyme in this species is believed to be ubiquinone. Couples the redox reaction to proton translocation (for every two electrons transferred, four hydrogen ions are translocated across the cytoplasmic membrane), and thus conserves the redox energy in a proton gradient. The protein is NADH-quinone oxidoreductase subunit B of Rhizobium rhizogenes (strain K84 / ATCC BAA-868) (Agrobacterium radiobacter).